Here is a 702-residue protein sequence, read N- to C-terminus: Vertnin (702 aa).

A disordered region spans residues 562–625; sequence VPTLGKGGQE…QGQPHSGPLL (64 aa). Over residues 570–582 the composition is skewed to basic and acidic residues; that stretch reads QEAEEKQEKEAGR.

It belongs to the vertnin family.

Its subcellular location is the nucleus. Acts as a transcription factor that regulates development of thoracic vertebrae. The polypeptide is Vertnin (Homo sapiens (Human)).